The sequence spans 586 residues: Alanine racemase ungC (586 aa).

The tract at residues 187–206 (RVGALPAAASTASPMGSSLP) is disordered. The span at 196–206 (STASPMGSSLP) shows a compositional bias: polar residues.

The protein belongs to the trans-sulfuration enzymes family. The cofactor is pyridoxal 5'-phosphate.

It catalyses the reaction L-alanine = D-alanine. Its pathway is secondary metabolite biosynthesis. Functionally, alanine racemase; part of the gene cluster that mediates the biosynthesis of the unguisins, gamma-aminobutyric acid (GABA)-containing fungal cyclic heptapeptides with the amino acid sequence cyclo-(D-Ala1-D-Val2-L-Phe3-D-Val4-D-Ala5-D-Trp6-GABA7) for unguisin A and cyclo-(D-Ala1-D-Val2-L-Leu3-D-Val4-D-Ala5-D-Trp6-GABA7) for unguisin B. Within the pathway, the alanine racemase ungC catalyzes the interconversion of L-alanine and D-alanine, providing the D-alanine which is accepted by the first adenylation domain of the nonribosomal peptide synthetase (NRPS) ungA. UngA is the main enzyme within the cluster which condenses the 7 residues using its respective 7 modules. The terminal condensation domain (Ct) is involved in cyclization with D-alanine and thereby releasing of unguisins A and B. Finally, the hydrolase ungD catalyzes the hydrolysis between the D-tryptophan and GABA residues of unguisins A and B to produce the corresponding linear peptides. This is Alanine racemase ungC from Aspergillus violaceofuscus (strain CBS 115571).